Consider the following 161-residue polypeptide: Protein-export protein SecB (161 aa).

It belongs to the SecB family. Homotetramer, a dimer of dimers. One homotetramer interacts with 1 SecA dimer.

Its subcellular location is the cytoplasm. Its function is as follows. One of the proteins required for the normal export of preproteins out of the cell cytoplasm. It is a molecular chaperone that binds to a subset of precursor proteins, maintaining them in a translocation-competent state. It also specifically binds to its receptor SecA. The polypeptide is Protein-export protein SecB (Ectopseudomonas mendocina (strain ymp) (Pseudomonas mendocina)).